A 271-amino-acid polypeptide reads, in one-letter code: Potential ATP-binding protein (271 aa).

34 to 41 (GQPGVGKT) is a binding site for ATP.

In Staphylococcus aureus, this protein is Potential ATP-binding protein.